The sequence spans 527 residues: Peptide chain release factor 3 (527 aa).

The 270-residue stretch at 9–278 (NKRRTFAIIS…GLTQWAPKPQ (270 aa)) folds into the tr-type G domain. Residues 18 to 25 (SHPDAGKT), 86 to 90 (DTPGH), and 140 to 143 (NKLD) each bind GTP.

It belongs to the TRAFAC class translation factor GTPase superfamily. Classic translation factor GTPase family. PrfC subfamily.

It is found in the cytoplasm. Its function is as follows. Increases the formation of ribosomal termination complexes and stimulates activities of RF-1 and RF-2. It binds guanine nucleotides and has strong preference for UGA stop codons. It may interact directly with the ribosome. The stimulation of RF-1 and RF-2 is significantly reduced by GTP and GDP, but not by GMP. The protein is Peptide chain release factor 3 of Haemophilus influenzae (strain 86-028NP).